Consider the following 60-residue polypeptide: Cytotoxin 1 (60 aa).

4 disulfide bridges follow: C3/C21, C14/C38, C42/C53, and C54/C59.

The protein belongs to the three-finger toxin family. Short-chain subfamily. Type IA cytotoxin sub-subfamily. In terms of assembly, monomer in solution; Homodimer and oligomer in the presence of negatively charged lipids forming a pore with a size ranging between 20 and 30 Angstroms. Expressed by the venom gland.

The protein resides in the secreted. Its subcellular location is the target cell membrane. Produces complete blockade of auricular contraction, which is irreversible at high concentrations. Induces apoptosis in leukemic cells. Possesses anti-arthritic and anti-inflammatory potential. In Naja kaouthia (Monocled cobra), this protein is Cytotoxin 1.